Consider the following 330-residue polypeptide: Ketol-acid reductoisomerase (NADP(+)) (330 aa).

The region spanning 1 to 181 (MNVYYEQDAD…GGTKAGVIET (181 aa)) is the KARI N-terminal Rossmann domain. Residues 24 to 27 (YGSQ), arginine 47, serine 50, serine 52, and 82 to 85 (DQNQ) contribute to the NADP(+) site. Histidine 107 is a catalytic residue. Glycine 133 serves as a coordination point for NADP(+). Residues 182-327 (SIKNETETDL…AKLRDMMSWL (146 aa)) enclose the KARI C-terminal knotted domain. Residues aspartate 190, glutamate 194, glutamate 226, and glutamate 230 each contribute to the Mg(2+) site. Serine 251 serves as a coordination point for substrate.

The protein belongs to the ketol-acid reductoisomerase family. Mg(2+) serves as cofactor.

The catalysed reaction is (2R)-2,3-dihydroxy-3-methylbutanoate + NADP(+) = (2S)-2-acetolactate + NADPH + H(+). The enzyme catalyses (2R,3R)-2,3-dihydroxy-3-methylpentanoate + NADP(+) = (S)-2-ethyl-2-hydroxy-3-oxobutanoate + NADPH + H(+). It functions in the pathway amino-acid biosynthesis; L-isoleucine biosynthesis; L-isoleucine from 2-oxobutanoate: step 2/4. It participates in amino-acid biosynthesis; L-valine biosynthesis; L-valine from pyruvate: step 2/4. Functionally, involved in the biosynthesis of branched-chain amino acids (BCAA). Catalyzes an alkyl-migration followed by a ketol-acid reduction of (S)-2-acetolactate (S2AL) to yield (R)-2,3-dihydroxy-isovalerate. In the isomerase reaction, S2AL is rearranged via a Mg-dependent methyl migration to produce 3-hydroxy-3-methyl-2-ketobutyrate (HMKB). In the reductase reaction, this 2-ketoacid undergoes a metal-dependent reduction by NADPH to yield (R)-2,3-dihydroxy-isovalerate. The sequence is that of Ketol-acid reductoisomerase (NADP(+)) from Pelodictyon phaeoclathratiforme (strain DSM 5477 / BU-1).